The following is a 483-amino-acid chain: UDP-N-acetylmuramoyl-L-alanyl-D-glutamate--2,6-diaminopimelate ligase (483 aa).

Residue S30 coordinates UDP-N-acetyl-alpha-D-muramoyl-L-alanyl-D-glutamate. Residue 109–115 coordinates ATP; the sequence is GTNGKTT. Residues 151 to 152, S178, and R186 contribute to the UDP-N-acetyl-alpha-D-muramoyl-L-alanyl-D-glutamate site; that span reads TT. N6-carboxylysine is present on K218. Meso-2,6-diaminopimelate contacts are provided by residues R380, 403 to 406, G453, and E457; that span reads DNPR. The Meso-diaminopimelate recognition motif motif lies at 403–406; the sequence is DNPR.

The protein belongs to the MurCDEF family. MurE subfamily. The cofactor is Mg(2+). Carboxylation is probably crucial for Mg(2+) binding and, consequently, for the gamma-phosphate positioning of ATP.

Its subcellular location is the cytoplasm. The enzyme catalyses UDP-N-acetyl-alpha-D-muramoyl-L-alanyl-D-glutamate + meso-2,6-diaminopimelate + ATP = UDP-N-acetyl-alpha-D-muramoyl-L-alanyl-gamma-D-glutamyl-meso-2,6-diaminopimelate + ADP + phosphate + H(+). Its pathway is cell wall biogenesis; peptidoglycan biosynthesis. Catalyzes the addition of meso-diaminopimelic acid to the nucleotide precursor UDP-N-acetylmuramoyl-L-alanyl-D-glutamate (UMAG) in the biosynthesis of bacterial cell-wall peptidoglycan. This chain is UDP-N-acetylmuramoyl-L-alanyl-D-glutamate--2,6-diaminopimelate ligase, found in Chlamydia pneumoniae (Chlamydophila pneumoniae).